The chain runs to 229 residues: Large ribosomal subunit protein uL1 (229 aa).

It belongs to the universal ribosomal protein uL1 family. In terms of assembly, part of the 50S ribosomal subunit.

Binds directly to 23S rRNA. The L1 stalk is quite mobile in the ribosome, and is involved in E site tRNA release. Its function is as follows. Protein L1 is also a translational repressor protein, it controls the translation of the L11 operon by binding to its mRNA. The polypeptide is Large ribosomal subunit protein uL1 (Mannheimia succiniciproducens (strain KCTC 0769BP / MBEL55E)).